The chain runs to 122 residues: Putative 2'-deoxynucleoside 5'-phosphate N-hydrolase 1 (122 aa).

Residues 4-10, Tyr19, His37, Glu83, and 105-107 contribute to the substrate site; these read FLSGSIR and SAM.

This sequence belongs to the 2'-deoxynucleoside 5'-phosphate N-hydrolase 1 family. As to quaternary structure, monomer and homodimer.

It carries out the reaction a pyrimidine 2'-deoxyribonucleoside 5'-phosphate + H2O = a pyrimidine nucleobase + 2-deoxy-D-ribose 5-phosphate. The enzyme catalyses a purine 2'-deoxyribonucleoside 5'-phosphate + H2O = a purine nucleobase + 2-deoxy-D-ribose 5-phosphate. Its function is as follows. Catalyzes the cleavage of the N-glycosidic bond of deoxyribonucleoside 5'-monophosphates to yield deoxyribose 5-phosphate and a purine or pyrimidine base. The polypeptide is Putative 2'-deoxynucleoside 5'-phosphate N-hydrolase 1 (Methanococcoides burtonii (strain DSM 6242 / NBRC 107633 / OCM 468 / ACE-M)).